Here is a 232-residue protein sequence, read N- to C-terminus: Peroxisomal protein PEX21 (232 aa).

A Glycyl cysteine thioester (Cys-Gly) (interchain with G-Cter in ubiquitin) cross-link involves residue cysteine 5.

The protein belongs to the peroxin-21 family. In terms of assembly, interacts with PEX7. Monoubiquitinated at Cys-5; acts as a signal for PEX21 extraction and is required for proper export from peroxisomes and recycling.

The protein localises to the cytoplasm. Its subcellular location is the cytosol. It localises to the peroxisome. Functionally, mediates peroxisomal import of proteins containing a C-terminal PTS2-type peroxisomal targeting signal via its interaction with PEX7. Interaction with PEX7 only takes place when PEX7 is associated with cargo proteins containing a PTS2 peroxisomal targeting signal. PEX7 along with PTS2-containing cargo proteins are then translocated through the PEX13-PEX14 docking complex together with PEX21. In Candida glabrata (strain ATCC 2001 / BCRC 20586 / JCM 3761 / NBRC 0622 / NRRL Y-65 / CBS 138) (Yeast), this protein is Peroxisomal protein PEX21 (PEX21).